Reading from the N-terminus, the 96-residue chain is Large ribosomal subunit protein eL14 (96 aa).

Belongs to the eukaryotic ribosomal protein eL14 family.

This Sulfurisphaera tokodaii (strain DSM 16993 / JCM 10545 / NBRC 100140 / 7) (Sulfolobus tokodaii) protein is Large ribosomal subunit protein eL14.